The chain runs to 938 residues: Bifunctional glutamine synthetase adenylyltransferase/adenylyl-removing enzyme (938 aa).

An adenylyl removase region spans residues 1–457 (MLEADAARLK…HFDHVFGDPS (457 aa)). Residues 460-938 (AHTLDSMWAA…ALWTIVFGSA (479 aa)) form an adenylyl transferase region.

This sequence belongs to the GlnE family. The cofactor is Mg(2+).

It catalyses the reaction [glutamine synthetase]-O(4)-(5'-adenylyl)-L-tyrosine + phosphate = [glutamine synthetase]-L-tyrosine + ADP. The enzyme catalyses [glutamine synthetase]-L-tyrosine + ATP = [glutamine synthetase]-O(4)-(5'-adenylyl)-L-tyrosine + diphosphate. Functionally, involved in the regulation of glutamine synthetase GlnA, a key enzyme in the process to assimilate ammonia. When cellular nitrogen levels are high, the C-terminal adenylyl transferase (AT) inactivates GlnA by covalent transfer of an adenylyl group from ATP to specific tyrosine residue of GlnA, thus reducing its activity. Conversely, when nitrogen levels are low, the N-terminal adenylyl removase (AR) activates GlnA by removing the adenylyl group by phosphorolysis, increasing its activity. The regulatory region of GlnE binds the signal transduction protein PII (GlnB) which indicates the nitrogen status of the cell. This Aromatoleum aromaticum (strain DSM 19018 / LMG 30748 / EbN1) (Azoarcus sp. (strain EbN1)) protein is Bifunctional glutamine synthetase adenylyltransferase/adenylyl-removing enzyme.